Reading from the N-terminus, the 728-residue chain is Catalase-peroxidase 1 (728 aa).

Positions 1–22 are cleaved as a signal peptide; that stretch reads MDKTQSSQGKCPVMHGANSAVA. Positions 97–225 form a cross-link, tryptophyl-tyrosyl-methioninium (Trp-Tyr) (with M-251); the sequence is WHSAGTYRVA…LAAVMMGLIY (129 aa). His98 acts as the Proton acceptor in catalysis. The tryptophyl-tyrosyl-methioninium (Tyr-Met) (with W-97) cross-link spans 225–251; sequence YVNPEGVDGKPDPLRTAQDVRVTFARM. His266 contacts heme b.

Belongs to the peroxidase family. Peroxidase/catalase subfamily. As to quaternary structure, homodimer or homotetramer. It depends on heme b as a cofactor. In terms of processing, formation of the three residue Trp-Tyr-Met cross-link is important for the catalase, but not the peroxidase activity of the enzyme.

The enzyme catalyses H2O2 + AH2 = A + 2 H2O. It catalyses the reaction 2 H2O2 = O2 + 2 H2O. Functionally, bifunctional enzyme with both catalase and broad-spectrum peroxidase activity. This is Catalase-peroxidase 1 from Shewanella sp. (strain ANA-3).